Here is a 92-residue protein sequence, read N- to C-terminus: Putative regulatory protein Tpet_0986 (92 aa).

The protein belongs to the RemA family.

The chain is Putative regulatory protein Tpet_0986 from Thermotoga petrophila (strain ATCC BAA-488 / DSM 13995 / JCM 10881 / RKU-1).